Reading from the N-terminus, the 384-residue chain is GTPase Obg (384 aa).

One can recognise an Obg domain in the interval 1–159; the sequence is MKFIDEAKIE…RSLQLELKVL (159 aa). Residues 20–46 are disordered; sequence ATSFRREKFVPRGGPDGGDGGKGGSVW. Gly residues predominate over residues 33 to 43; that stretch reads GPDGGDGGKGG. Residues 160 to 348 form the OBG-type G domain; it reads ADVGLLGMPN…LVHQINQYLT (189 aa). GTP contacts are provided by residues 166 to 173, 191 to 195, 213 to 216, 284 to 287, and 329 to 331; these read GMPNAGKS, FTTLH, DIPG, NKLD, and SAL. 2 residues coordinate Mg(2+): Ser-173 and Thr-193.

It belongs to the TRAFAC class OBG-HflX-like GTPase superfamily. OBG GTPase family. As to quaternary structure, monomer. It depends on Mg(2+) as a cofactor.

It is found in the cytoplasm. In terms of biological role, an essential GTPase which binds GTP, GDP and possibly (p)ppGpp with moderate affinity, with high nucleotide exchange rates and a fairly low GTP hydrolysis rate. Plays a role in control of the cell cycle, stress response, ribosome biogenesis and in those bacteria that undergo differentiation, in morphogenesis control. The chain is GTPase Obg from Neisseria meningitidis serogroup B (strain ATCC BAA-335 / MC58).